A 76-amino-acid chain; its full sequence is Large ribosomal subunit protein bL31 (76 aa).

Positions 16, 18, 37, and 40 each coordinate Zn(2+).

Belongs to the bacterial ribosomal protein bL31 family. Type A subfamily. Part of the 50S ribosomal subunit. The cofactor is Zn(2+).

In terms of biological role, binds the 23S rRNA. The polypeptide is Large ribosomal subunit protein bL31 (Solibacter usitatus (strain Ellin6076)).